A 58-amino-acid polypeptide reads, in one-letter code: UPF0337 protein OB2685 (58 aa).

Basic and acidic residues-rich tracts occupy residues 1–22 (MSDG…EAKD) and 30–46 (DPQR…KGEA). A disordered region spans residues 1 to 58 (MSDGMKDKAKAIGKKIKGEAKDQWGSATDDPQRKAEGKRDKAKGEAQDTIADAKNNNK).

Belongs to the UPF0337 (CsbD) family.

The protein is UPF0337 protein OB2685 of Oceanobacillus iheyensis (strain DSM 14371 / CIP 107618 / JCM 11309 / KCTC 3954 / HTE831).